We begin with the raw amino-acid sequence, 142 residues long: Large ribosomal subunit protein uL13 (142 aa).

It belongs to the universal ribosomal protein uL13 family. As to quaternary structure, part of the 50S ribosomal subunit.

Its function is as follows. This protein is one of the early assembly proteins of the 50S ribosomal subunit, although it is not seen to bind rRNA by itself. It is important during the early stages of 50S assembly. This Stutzerimonas stutzeri (strain A1501) (Pseudomonas stutzeri) protein is Large ribosomal subunit protein uL13.